Here is a 501-residue protein sequence, read N- to C-terminus: Carboxypeptidase 1 (501 aa).

The region spanning isoleucine 3–serine 496 is the Peptidase M32 domain. The short motif at histidine 234 to phenylalanine 236 is the HPF element. Residues aspartate 244 to threonine 248 carry the DXRXT motif. Histidine 265 is a Zn(2+) binding site. The HEXXH signature appears at histidine 265 to histidine 269. Glutamate 266 functions as the Proton donor/acceptor in the catalytic mechanism. 2 residues coordinate Zn(2+): histidine 269 and glutamate 295. The short motif at histidine 294 to glutamine 297 is the HES/GQ element. Positions isoleucine 347–aspartate 352 match the I/NRXXA/SD motif. A GXXQDXHW motif is present at residues glycine 402–tryptophan 409.

This sequence belongs to the peptidase M32 family. In terms of assembly, homodimer. Zn(2+) serves as cofactor.

The enzyme catalyses Release of a C-terminal amino acid with broad specificity, except for -Pro.. In terms of biological role, broad specificity carboxypetidase that releases amino acids sequentially from the C-terminus, including neutral, aromatic, polar and basic residues. Has lower activity with substrates ending with His or Trp. This chain is Carboxypeptidase 1 (ypwA), found in Bacillus subtilis (strain 168).